Consider the following 185-residue polypeptide: Ribosome-recycling factor (185 aa).

Belongs to the RRF family.

The protein localises to the cytoplasm. Its function is as follows. Responsible for the release of ribosomes from messenger RNA at the termination of protein biosynthesis. May increase the efficiency of translation by recycling ribosomes from one round of translation to another. The sequence is that of Ribosome-recycling factor from Pseudoalteromonas atlantica (strain T6c / ATCC BAA-1087).